Consider the following 702-residue polypeptide: Elongation factor G (702 aa).

The tr-type G domain occupies 8 to 290 (CQYRNIGISA…AIIEYLPAPN (283 aa)). GTP contacts are provided by residues 17 to 24 (AHIDAGKT), 88 to 92 (DTPGH), and 142 to 145 (NKMD).

It belongs to the TRAFAC class translation factor GTPase superfamily. Classic translation factor GTPase family. EF-G/EF-2 subfamily.

The protein resides in the cytoplasm. In terms of biological role, catalyzes the GTP-dependent ribosomal translocation step during translation elongation. During this step, the ribosome changes from the pre-translocational (PRE) to the post-translocational (POST) state as the newly formed A-site-bound peptidyl-tRNA and P-site-bound deacylated tRNA move to the P and E sites, respectively. Catalyzes the coordinated movement of the two tRNA molecules, the mRNA and conformational changes in the ribosome. In Buchnera aphidicola subsp. Schizaphis graminum (strain Sg), this protein is Elongation factor G.